Reading from the N-terminus, the 551-residue chain is Colicin-E6 (551 aa).

Disordered regions lie at residues 1–74 (MSGG…SGGG), 244–269 (LSPG…NTRD), 293–317 (PDQV…HPVE), 406–501 (NKQA…WYGD), and 517–551 (EGYR…KKYL). Residues 20–35 (INGGPTGLGVGGGASD) are compositionally biased toward gly residues. Low complexity predominate over residues 36-45 (GSGWSSENNP). Gly residues predominate over residues 46-74 (WGGGSGSGIHWGGGSGHGNGGGNGNSGGG). Basic and acidic residues-rich tracts occupy residues 296–317 (VKQR…HPVE) and 430–484 (ESRK…EGKP). A ribosome inactivating activity region spans residues 455–551 (KGVKDYGHDY…DPKRNIKKYL (97 aa)). The tract at residues 530-551 (FEPKTGNQLKGPDPKRNIKKYL) is binding of immunity protein.

This sequence belongs to the cloacin colicin family.

Functionally, inactivates ribosomes by hydrolyzing 16S RNA in 30S ribosomes at a specific site. Its function is as follows. Colicins are polypeptide toxins produced by and active against E.coli and closely related bacteria. This is Colicin-E6 from Escherichia coli.